We begin with the raw amino-acid sequence, 407 residues long: Arginine deiminase (407 aa).

Residue Cys-397 is the Amidino-cysteine intermediate of the active site.

It belongs to the arginine deiminase family.

It is found in the cytoplasm. The enzyme catalyses L-arginine + H2O = L-citrulline + NH4(+). Its pathway is amino-acid degradation; L-arginine degradation via ADI pathway; carbamoyl phosphate from L-arginine: step 1/2. In Limosilactobacillus fermentum (strain NBRC 3956 / LMG 18251) (Lactobacillus fermentum), this protein is Arginine deiminase.